Consider the following 270-residue polypeptide: MNARALYKRPPPVSSSQSEASGKRRTRTLDALGFDNYIICNYRLVFYEMMASKMKDRKKTPVSHKVIEKRRRDRINRCLNELGKTVPMALAKQNSGKLEKAEILEMTVQYLRALHSADFPRGREKGELLTEFANYFHYGYHECMKNLVHYLTTVERMETKDTKYARILAFLQSKVVTEPVFGSLGTISPDPTDLLCQLEYQSPSPTESVFQQSPPGHFSWHSSTRSPTLAYPAMSQHSGYLSPVQGLDHHYMNFIGHNAFSLHNAQHAAL.

Positions 1–24 (MNARALYKRPPPVSSSQSEASGKR) are disordered. In terms of domain architecture, bHLH spans 59–114 (KTPVSHKVIEKRRRDRINRCLNELGKTVPMALAKQNSGKLEKAEILEMTVQYLRAL). One can recognise an Orange domain in the interval 136–171 (FHYGYHECMKNLVHYLTTVERMETKDTKYARILAFL).

This sequence belongs to the HEY family.

It is found in the nucleus. Its function is as follows. Transcriptional repressor which binds preferentially to the canonical E box sequence 5'-CACGCG-3'. The protein is Hairy and enhancer of split-related protein helt (helt) of Danio rerio (Zebrafish).